A 388-amino-acid polypeptide reads, in one-letter code: GTPase Obg (388 aa).

An Obg domain is found at 1–159; it reads MKFVDEATIR…RSLRLELMLL (159 aa). Residues 160 to 333 form the OBG-type G domain; the sequence is ADVGLLGMPN…LALKLLDFID (174 aa). GTP is bound by residues 166-173, 191-195, 213-216, 283-286, and 314-316; these read GMPNAGKS, FTTLV, DIPG, NKAD, and SAY. Mg(2+)-binding residues include S173 and T193. Residues 356–377 form a disordered region; that stretch reads QNANESVNEDYDDDLDDDDYDD. The segment covering 362-377 has biased composition (acidic residues); that stretch reads VNEDYDDDLDDDDYDD.

It belongs to the TRAFAC class OBG-HflX-like GTPase superfamily. OBG GTPase family. In terms of assembly, monomer. Mg(2+) serves as cofactor.

Its subcellular location is the cytoplasm. Functionally, an essential GTPase which binds GTP, GDP and possibly (p)ppGpp with moderate affinity, with high nucleotide exchange rates and a fairly low GTP hydrolysis rate. Plays a role in control of the cell cycle, stress response, ribosome biogenesis and in those bacteria that undergo differentiation, in morphogenesis control. This chain is GTPase Obg, found in Shewanella piezotolerans (strain WP3 / JCM 13877).